The chain runs to 607 residues: Pogo transposable element with KRAB domain (607 aa).

Residues 8–29 are a coiled coil; that stretch reads LNLTLKEEQKEEEVEIQELEDG. Lys13 is covalently cross-linked (Glycyl lysine isopeptide (Lys-Gly) (interchain with G-Cter in SUMO2)). The KRAB domain maps to 47 to 118; sequence ALFDEVAIYF…DEWRLQGVTF (72 aa). The HTH CENPB-type domain maps to 250–323; it reads AFRGPKNGRF…MRRYDLSLRH (74 aa). The DDE-1 domain maps to 355–567; sequence YEVAQMGNAD…ISSESIVQGF (213 aa). Residue Lys384 forms a Glycyl lysine isopeptide (Lys-Gly) (interchain with G-Cter in SUMO2) linkage. The interval 588–607 is disordered; sequence GELPKEPPKECGPESVAEGD. Positions 589–599 are enriched in basic and acidic residues; sequence ELPKEPPKECG.

It localises to the nucleus. In Mus musculus (Mouse), this protein is Pogo transposable element with KRAB domain (Pogk).